We begin with the raw amino-acid sequence, 256 residues long: Type III pantothenate kinase (256 aa).

Residue 6–13 (DIGNTHIV) coordinates ATP. 109–112 (GADR) serves as a coordination point for substrate. D111 acts as the Proton acceptor in catalysis. D132 is a binding site for K(+). ATP is bound at residue T135. T186 is a substrate binding site.

It belongs to the type III pantothenate kinase family. Homodimer. NH4(+) serves as cofactor. Requires K(+) as cofactor.

The protein localises to the cytoplasm. It carries out the reaction (R)-pantothenate + ATP = (R)-4'-phosphopantothenate + ADP + H(+). It functions in the pathway cofactor biosynthesis; coenzyme A biosynthesis; CoA from (R)-pantothenate: step 1/5. Functionally, catalyzes the phosphorylation of pantothenate (Pan), the first step in CoA biosynthesis. The polypeptide is Type III pantothenate kinase (Fusobacterium nucleatum subsp. nucleatum (strain ATCC 25586 / DSM 15643 / BCRC 10681 / CIP 101130 / JCM 8532 / KCTC 2640 / LMG 13131 / VPI 4355)).